Here is a 287-residue protein sequence, read N- to C-terminus: Nuclease S1 (287 aa).

A signal peptide spans 1-20 (MPRLLPISAATLALAQLTYG). A divalent metal cation contacts are provided by Trp21, His26, Asp65, and His80. Substrate contacts are provided by residues 21 to 26 (WGNLGH), 65 to 71 (DTYKYTD), 80 to 83 (HFID), and 93 to 98 (GVDYDR). Cystine bridges form between Cys92–Cys236 and Cys100–Cys105. N-linked (GlcNAc...) asparagine glycosylation is found at Asn112 and Asn122. A divalent metal cation contacts are provided by His135, Asp139, His145, His168, and Asp172. The substrate binding stretch occupies residues 135-183 (HIIGDIHQPLHDENLEAGGNGIDVTYDGETTNLHHIWDTNMPEEAAGGY). Residue Asn248 is glycosylated (N-linked (GlcNAc...) asparagine).

This sequence belongs to the nuclease type I family. In terms of assembly, monomer. Zn(2+) is required as a cofactor.

The enzyme catalyses Endonucleolytic cleavage to 5'-phosphomononucleotide and 5'-phosphooligonucleotide end-products.. Inhibited by inorganic phosphate (Pi). In terms of biological role, hydrolyzes only single-stranded DNA and RNA without apparent specificity for bases. The protein is Nuclease S1 of Aspergillus oryzae (strain ATCC 42149 / RIB 40) (Yellow koji mold).